The sequence spans 579 residues: Matrix metalloproteinase-C (579 aa).

Residues 1–17 (MRLIYVIAILLVSTCQA) form the signal peptide. A propeptide spans 18 to 129 (GFFSSLVSRF…SRCGVTDAPL (112 aa)) (activation peptide). A disordered region spans residues 32-51 (NSSPSSSSSSSSFSNSRKPS). The span at 33-50 (SSPSSSSSSSSFSNSRKP) shows a compositional bias: low complexity. The Cysteine switch signature appears at 120-127 (SRCGVTDA). Residues C122, H200, D202, H215, and H225 each contribute to the Zn(2+) site. N-linked (GlcNAc...) asparagine glycosylation occurs at N231. A Zn(2+)-binding site is contributed by H254. E255 is an active-site residue. The Zn(2+) site is built by H258 and H264. A disordered region spans residues 307-394 (SGRSSSGSDF…SSSGSSGGGC (88 aa)). Residues 315-324 (DFGGSSGGGS) show a composition bias toward gly residues. A compositionally biased stretch (low complexity) spans 325–341 (RTTARPTTTTRSWFGRF). Gly residues predominate over residues 373 to 394 (WGSGSGSSGRGGSSSGSSGGGC). 2 Hemopexin repeats span residues 395 to 437 (PSHI…FPSA) and 438 to 490 (PTPV…LGFS).

Belongs to the peptidase M10A family. Zn(2+) serves as cofactor.

It is found in the secreted. Its subcellular location is the extracellular space. It localises to the extracellular matrix. Inhibited by human TIMP1 and TIMP2 and the broad MMP inhibitors BB94 (Batimastat) and CT543. In terms of biological role, metalloproteinase. The sequence is that of Matrix metalloproteinase-C from Caenorhabditis elegans.